The primary structure comprises 271 residues: Sec-independent protein translocase protein TatC (271 aa).

Transmembrane regions (helical) follow at residues 35–55 (IIWTFVYIAAGFGVCWWWHEQ), 93–113 (AFIAGLFVASPFVLYQVWLFI), 124–144 (YVLPFMFSTVLLFLGGGVFGY), 178–198 (IILGLGIVFEMPILVFFLALM), 213–233 (SILVIFVIAAIITPTTDIMNM), and 234–254 (CVFAAPMILLYILSIGVAFLV).

This sequence belongs to the TatC family. As to quaternary structure, forms a complex with TatA.

It is found in the cell inner membrane. Its function is as follows. Part of the twin-arginine translocation (Tat) system that transports large folded proteins containing a characteristic twin-arginine motif in their signal peptide across membranes. This chain is Sec-independent protein translocase protein TatC, found in Koribacter versatilis (strain Ellin345).